A 543-amino-acid chain; its full sequence is Formin-binding protein 1-like (543 aa).

Residues 1–263 enclose the F-BAR domain; it reads MSWGTELWDQ…AAKSVDERRD (263 aa). Coiled-coil stretches lie at residues 66 to 258 and 334 to 426; these read FTSC…AKSV and LEDF…QRSE. The region spanning 339–416 is the REM-1 domain; that stretch reads HLPPEQRRKR…IHKNEGWLSE (78 aa). The segment at 424-467 is disordered; that stretch reads RSERRHSAEANHLVAQGRESPEGSYTEDANQEGRVQPQHHAHPE. An SH3 domain is found at 479–540; the sequence is PAIGHCKSLY…PTSYIEITLE (62 aa).

The protein belongs to the FNBP1 family. Homodimerizes, the dimers can polymerize end-to-end to form filamentous structures. Interacts with GTP-bound cdc42 and wasl/n-wasp.

It is found in the cytoplasm. The protein localises to the cytoskeleton. It localises to the cell cortex. Its subcellular location is the cytoplasmic vesicle. The protein resides in the cell membrane. Functionally, required to coordinate membrane tubulation with reorganization of the actin cytoskeleton during endocytosis. Essential for autophagy of intracellular bacterial pathogens. Promotes cdc42-induced actin polymerization by activating the wasl-waspip complex, the predominant form of wasl/n-wasp in cells. This chain is Formin-binding protein 1-like (fnbp1l), found in Xenopus laevis (African clawed frog).